A 172-amino-acid chain; its full sequence is Adenine phosphoribosyltransferase (172 aa).

This sequence belongs to the purine/pyrimidine phosphoribosyltransferase family. As to quaternary structure, homodimer.

Its subcellular location is the cytoplasm. It carries out the reaction AMP + diphosphate = 5-phospho-alpha-D-ribose 1-diphosphate + adenine. Its pathway is purine metabolism; AMP biosynthesis via salvage pathway; AMP from adenine: step 1/1. In terms of biological role, catalyzes a salvage reaction resulting in the formation of AMP, that is energically less costly than de novo synthesis. The protein is Adenine phosphoribosyltransferase of Clostridium novyi (strain NT).